A 31-amino-acid chain; its full sequence is LNKRCAGIGSFCGLPGLVDCCSGRCFIVCLP.

The propeptide occupies 1-4; it reads LNKR. 3 disulfide bridges follow: cysteine 5–cysteine 21, cysteine 12–cysteine 25, and cysteine 20–cysteine 29.

This sequence belongs to the conotoxin O1 superfamily. As to expression, expressed by the venom duct.

It is found in the secreted. In terms of biological role, this toxin activates voltage-gated sodium channels. It shifts the voltage-dependence of activation to more hyperpolarized potentials but has only little effect on channel inactivation. It is active on Nav1.3/SCN3A (EC(50)=3.98 nM), Nav1.4/SCN4A (EC(50)=4.99 nM), Nav1.6/SCN8A (EC(50)=1.27 nM) and Nav1.7/SCN9A (EC(50)=2.42 nM) voltage-gated sodium channels. In vivo, it induces nocifensive or pain-like behaviors in mice when injected intraplantarly. In Conus eburneus (Ivory cone), this protein is Delta-conotoxin-like ErVIA.